Here is a 505-residue protein sequence, read N- to C-terminus: Histidine ammonia-lyase (505 aa).

The segment at residues 141 to 143 (ASG) is a cross-link (5-imidazolinone (Ala-Gly)). 2,3-didehydroalanine (Ser) is present on serine 142.

The protein belongs to the PAL/histidase family. Contains an active site 4-methylidene-imidazol-5-one (MIO), which is formed autocatalytically by cyclization and dehydration of residues Ala-Ser-Gly.

It localises to the cytoplasm. It catalyses the reaction L-histidine = trans-urocanate + NH4(+). The protein operates within amino-acid degradation; L-histidine degradation into L-glutamate; N-formimidoyl-L-glutamate from L-histidine: step 1/3. The chain is Histidine ammonia-lyase from Bacillus cereus (strain ATCC 10987 / NRS 248).